The chain runs to 95 residues: MSVDQATVRRVAHLARIAVSEEELEPLKGELNAILAFVEQLANLDVADVEPMTGVIPMELPMREDVVTDGHYPEKILANAPEAEGGFFTVPKVVE.

Belongs to the GatC family. As to quaternary structure, heterotrimer of A, B and C subunits.

The enzyme catalyses L-glutamyl-tRNA(Gln) + L-glutamine + ATP + H2O = L-glutaminyl-tRNA(Gln) + L-glutamate + ADP + phosphate + H(+). It carries out the reaction L-aspartyl-tRNA(Asn) + L-glutamine + ATP + H2O = L-asparaginyl-tRNA(Asn) + L-glutamate + ADP + phosphate + 2 H(+). In terms of biological role, allows the formation of correctly charged Asn-tRNA(Asn) or Gln-tRNA(Gln) through the transamidation of misacylated Asp-tRNA(Asn) or Glu-tRNA(Gln) in organisms which lack either or both of asparaginyl-tRNA or glutaminyl-tRNA synthetases. The reaction takes place in the presence of glutamine and ATP through an activated phospho-Asp-tRNA(Asn) or phospho-Glu-tRNA(Gln). This Azorhizobium caulinodans (strain ATCC 43989 / DSM 5975 / JCM 20966 / LMG 6465 / NBRC 14845 / NCIMB 13405 / ORS 571) protein is Aspartyl/glutamyl-tRNA(Asn/Gln) amidotransferase subunit C.